The chain runs to 125 residues: Glycine cleavage system H protein (125 aa).

The Lipoyl-binding domain occupies 23–103 (TALVGITDFA…PYNAWLIKMK (81 aa)). Lysine 64 carries the N6-lipoyllysine modification.

This sequence belongs to the GcvH family. In terms of assembly, the glycine cleavage system is composed of four proteins: P, T, L and H. Requires (R)-lipoate as cofactor.

In terms of biological role, the glycine cleavage system catalyzes the degradation of glycine. The H protein shuttles the methylamine group of glycine from the P protein to the T protein. In Chlorobium chlorochromatii (strain CaD3), this protein is Glycine cleavage system H protein.